Consider the following 298-residue polypeptide: UDP-N-acetylenolpyruvoylglucosamine reductase (298 aa).

Residues 26-191 (KTGGEAEYLA…LSATFSLTPG (166 aa)) form the FAD-binding PCMH-type domain. The active site involves Arg170. Ser220 acts as the Proton donor in catalysis. The active site involves Glu290.

This sequence belongs to the MurB family. Requires FAD as cofactor.

It is found in the cytoplasm. It catalyses the reaction UDP-N-acetyl-alpha-D-muramate + NADP(+) = UDP-N-acetyl-3-O-(1-carboxyvinyl)-alpha-D-glucosamine + NADPH + H(+). The protein operates within cell wall biogenesis; peptidoglycan biosynthesis. In terms of biological role, cell wall formation. The chain is UDP-N-acetylenolpyruvoylglucosamine reductase from Lactobacillus helveticus (strain DPC 4571).